The sequence spans 122 residues: Large ribosomal subunit protein uL14c (122 aa).

Belongs to the universal ribosomal protein uL14 family. Part of the 50S ribosomal subunit.

The protein resides in the plastid. Its function is as follows. Binds to 23S rRNA. This Euglena longa (Euglenophycean alga) protein is Large ribosomal subunit protein uL14c.